A 164-amino-acid chain; its full sequence is UPF0225 protein Shewana3_2159 (164 aa).

The protein belongs to the UPF0225 family.

This Shewanella sp. (strain ANA-3) protein is UPF0225 protein Shewana3_2159.